Consider the following 234-residue polypeptide: Large ribosomal subunit protein uL1 (234 aa).

It belongs to the universal ribosomal protein uL1 family. In terms of assembly, part of the 50S ribosomal subunit.

Its function is as follows. Binds directly to 23S rRNA. The L1 stalk is quite mobile in the ribosome, and is involved in E site tRNA release. In terms of biological role, protein L1 is also a translational repressor protein, it controls the translation of the L11 operon by binding to its mRNA. The sequence is that of Large ribosomal subunit protein uL1 from Sodalis glossinidius (strain morsitans).